We begin with the raw amino-acid sequence, 416 residues long: MSGHRSTRKRCGDSHPESPVGFGHMSTTGCVLNKLFQLPTPPLSRHQLKRLEEHRYQSAGRSLLEPLMQGYWEWLVRRVPSWIAPNLITIIGLSINICTTILLVFYCPTATEQAPLWAYIACACGLFIYQSLDAIDGKQARRTNSSSPLGELFDHGCDSLSTVFVVLGTCIAVQLGTNPDWMFFCCFAGTFMFYCAHWQTYVSGTLRFGIIDVTEVQIFIIIMHLLAVIGGPPFWQSMIPVLNIQMKIFPALCTVAGTIFSCTNYFRVIFTGGVGKNGSTIAGTSVLSPFLHIGSVITLAAMIYKKSAVQLFEKHPCLYILTFGFVSAKITNKLVVAHMTKSEMHLHDTAFIGPALLFLDQYFNSFIDEYIVLWIALVFSFFDLIRYCVSVCNQIASHLHIHVFRIKVSTAHSNHH.

The tract at residues 1–20 (MSGHRSTRKRCGDSHPESPV) is disordered. Ser18 carries the post-translational modification Phosphoserine. The residue at position 40 (Thr40) is a Phosphothreonine. CDP-choline is bound at residue Asn86. 2 helical membrane passes run 89-108 (TIIG…FYCP) and 116-133 (LWAY…QSLD). Residue Asp133 coordinates Mg(2+). N-linked (GlcNAc...) asparagine glycosylation is present at Asn144. Residue Glu151 coordinates CDP-choline. A Mg(2+)-binding site is contributed by Asp154. The active-site Proton acceptor is His155. Helical transmembrane passes span 156–176 (GCDS…VQLG), 180–199 (DWMF…AHWQ), 210–230 (IIDV…AVIG), 246–267 (MKIF…NYFR), 286–306 (VLSP…IYKK), 315–334 (HPCL…TNKL), 349–363 (TAFI…DQYF), and 368–388 (DEYI…IRYC). Residue Asp158 participates in Mg(2+) binding.

Belongs to the CDP-alcohol phosphatidyltransferase class-I family. Homodimer. Mg(2+) is required as a cofactor. The cofactor is Mn(2+). As to expression, ubiquitously expressed.

The protein resides in the endoplasmic reticulum membrane. It is found in the nucleus membrane. The catalysed reaction is CDP-ethanolamine + a 1,2-diacyl-sn-glycerol = a 1,2-diacyl-sn-glycero-3-phosphoethanolamine + CMP + H(+). The enzyme catalyses CDP-choline + a 1,2-diacyl-sn-glycerol = a 1,2-diacyl-sn-glycero-3-phosphocholine + CMP + H(+). It catalyses the reaction 1-O-alkyl-2-acyl-sn-glycerol + CDP-choline = a 1-O-alkyl-2-acyl-sn-glycero-3-phosphocholine + CMP + H(+). It carries out the reaction a 1-O-(1Z-alkenyl)-2-acyl-sn-glycerol + CDP-choline = a 1-O-(1Z-alkenyl)-2-acyl-sn-glycero-3-phosphocholine + CMP + H(+). The catalysed reaction is 1,2-dioctanoyl-sn-glycerol + CDP-choline = 1,2-dioctanoyl-sn-glycero-3-phosphocholine + CMP + H(+). The enzyme catalyses 1,2-didecanoyl-sn-glycerol + CDP-choline = 1,2-didecanoyl-sn-glycero-3-phosphocholine + CMP + H(+). It catalyses the reaction CDP-choline + 1,2-di-(9Z-octadecenoyl)-sn-glycerol = 1,2-di-(9Z-octadecenoyl)-sn-glycero-3-phosphocholine + CMP + H(+). It carries out the reaction 1-hexadecanoyl-2-(9Z-octadecenoyl)-sn-glycerol + CDP-choline = 1-hexadecanoyl-2-(9Z-octadecenoyl)-sn-glycero-3-phosphocholine + CMP + H(+). The catalysed reaction is CDP-ethanolamine + 1,2-di-(9Z-octadecenoyl)-sn-glycerol = 1,2-di-(9Z-octadecenoyl)-sn-glycero-3-phosphoethanolamine + CMP + H(+). The enzyme catalyses 1-hexadecanoyl-2-(9Z-octadecenoyl)-sn-glycerol + CDP-ethanolamine = 1-hexadecanoyl-2-(9Z-octadecenoyl)-sn-glycero-3-phosphoethanolamine + CMP + H(+). It catalyses the reaction 1-hexadecanoyl-2-(4Z,7Z,10Z,13Z,16Z,19Z-docosahexaenoyl)-sn-glycerol + CDP-choline = 1-hexadecanoyl-2-(4Z,7Z,10Z,13Z,16Z,19Z-docosahexaenoyl)-sn-glycero-3-phosphocholine + CMP + H(+). It carries out the reaction 1,2-di-(9Z-hexadecenoyl)-sn-glycerol + CDP-choline = 1,2-di-(9Z-hexadecenoyl)-sn-glycero-3-phosphocholine + CMP + H(+). The catalysed reaction is 1,2-di-(9Z-hexadecenoyl)-sn-glycerol + CDP-ethanolamine = 1,2-di-(9Z-hexadecenoyl)-sn-glycero-3-phosphoethanolamine + CMP + H(+). The enzyme catalyses 1-O-hexadecyl-2-acetyl-sn-glycerol + CDP-choline = 1-O-hexadecyl-2-acetyl-sn-glycero-3-phosphocholine + CMP + H(+). It catalyses the reaction 1-O-hexadecyl-2-(5Z,8Z,11Z,14Z-eicosatetraenoyl)-sn-glycerol + CDP-choline = 1-O-hexadecyl-2-(5Z,8Z,11Z,14Z)-eicosatetraenoyl-sn-glycero-3-phosphocholine + CMP + H(+). Its pathway is phospholipid metabolism; phosphatidylethanolamine biosynthesis; phosphatidylethanolamine from ethanolamine: step 3/3. The protein operates within phospholipid metabolism; phosphatidylcholine biosynthesis; phosphatidylcholine from phosphocholine: step 2/2. Its function is as follows. Catalyzes both phosphatidylcholine and phosphatidylethanolamine biosynthesis from CDP-choline and CDP-ethanolamine, respectively. Involved in protein-dependent process of phospholipid transport to distribute phosphatidyl choline to the lumenal surface. Has a higher cholinephosphotransferase activity than ethanolaminephosphotransferase activity. The chain is Choline/ethanolaminephosphotransferase 1 from Homo sapiens (Human).